The sequence spans 161 residues: Prs ADP-ribosylating toxin (161 aa).

This sequence belongs to the MbcT/ParT/Res family. Homodimer, forms heterotetrameric ParS(2)-ParT(2) complexes. Post-translationally, consumes NAD(+) and auto-ADP-ribosylates on the tryptic fragment Ala-47-Arg-66 in vitro. Also auto-ADP-ribosylates using NADP(+).

In terms of biological role, toxic component of a type II toxin-antitoxin (TA) system. Expression in E.coli inhibits cell growth; bacteriostasis is neutralized by expression of cognate antitoxin ParS. ADP-ribosylates E.coli ribose-phosphate pyrophosphokinase (RPPK, prs) using NAD(+) in vitro; ADP-ribosylates RPPK on 'Lys-182' and 'Ser-202'. Cannot use NADP(+). Also auto-ADP-ribosylates in vitro; in the presence of RPPK auto-ADP-ribosylation decreases. This is Prs ADP-ribosylating toxin from Sphingobium sp. (strain YBL2).